A 411-amino-acid polypeptide reads, in one-letter code: Serpin A12 (411 aa).

The N-terminal stretch at 1-20 (MNLVLGLGLFLAGLLTVKGL) is a signal peptide. N-linked (GlcNAc...) asparagine glycosylation is found at Asn-92 and Asn-267. Residues 364–382 (GTEGAAGSGAQTLPMETPR) are reactive center loop.

This sequence belongs to the serpin family. As to quaternary structure, forms a stable complex with KLK7. In terms of processing, glycosylation slightly decreases affinity for heparin, but otherwise has no significant effect on KLK7 inhibitory activity or thermal stability of the protein. As to expression, expressed in visceral adipose tissues.

It localises to the secreted. Inhibition of KLK7 is enhanced by heparin. In terms of biological role, adipokine that modulates insulin action by specifically inhibiting its target protease KLK7 in white adipose tissues. The protein is Serpin A12 (Serpina12) of Rattus norvegicus (Rat).